The sequence spans 163 residues: Nucleotide-binding protein Npun_R4736 (163 aa).

It belongs to the YajQ family.

Functionally, nucleotide-binding protein. This is Nucleotide-binding protein Npun_R4736 from Nostoc punctiforme (strain ATCC 29133 / PCC 73102).